The chain runs to 742 residues: Ferric enterobactin receptor PirA (742 aa).

The signal sequence occupies residues 1–28 (MYPQFRRGHLAAAVLFASSSLLGGQALA). Residues 57-184 (QELKQAPGVS…AGGVVNIITK (128 aa)) enclose the TBDR plug domain. 2 disordered regions span residues 91–112 (GVNL…IDIR) and 409–435 (SSLK…PKSK). Residues 94–108 (LTGNSSSGQRGNNRQ) are compositionally biased toward polar residues. In terms of domain architecture, TBDR beta-barrel spans 189-742 (RLRGSMTVFT…AYYVSMTTSF (554 aa)). Cys516 and Cys525 form a disulfide bridge. The TonB C-terminal box signature appears at 725–742 (ATYNEPGRAYYVSMTTSF).

The protein belongs to the TonB-dependent receptor family.

It localises to the cell outer membrane. Specific receptor for the siderophore ferric enterobactin. Probably involved in the transport of siderophores, including host catecholamines such as L-DOPA. The polypeptide is Ferric enterobactin receptor PirA (Pseudomonas aeruginosa (strain ATCC 15692 / DSM 22644 / CIP 104116 / JCM 14847 / LMG 12228 / 1C / PRS 101 / PAO1)).